Reading from the N-terminus, the 243-residue chain is Mesoderm posterior protein 1 (243 aa).

A disordered region spans residues 1-86 (MAQPLCEPRS…QRQSASEREK (86 aa)). The span at 27–36 (DGNSVCSPAW) shows a compositional bias: polar residues. Residues 76 to 130 (GQRQSASEREKLRMRTLARALHELRRFLPPSVAPTGQNLTKIETLRLAIRYIGHL) form the bHLH domain. Residues 153–157 (CPLCP) carry the CPLCP motif. The interval 204-228 (AETASQERQEMEPSPSSPLFSSDML) is disordered.

As to expression, no expression was detected in adult tissues except the testis. Expression in the testis was regulated developmentally; expressed 2 weeks after birth, and increases, reaching the full expression level in mature testes.

The protein resides in the nucleus. Functionally, transcription factor. Plays a role in the epithelialization of somitic mesoderm and in the development of cardiac mesoderm. Defines the rostrocaudal patterning of the somites by participating in distinct Notch pathways. The protein is Mesoderm posterior protein 1 (Mesp1) of Mus musculus (Mouse).